We begin with the raw amino-acid sequence, 269 residues long: Formamidopyrimidine-DNA glycosylase (269 aa).

Residue P2 is the Schiff-base intermediate with DNA of the active site. The active-site Proton donor is the E3. K57 functions as the Proton donor; for beta-elimination activity in the catalytic mechanism. H90, R109, and R150 together coordinate DNA. Residues 235–269 form an FPG-type zinc finger; the sequence is NVYGRKGEPCEACGKAIESKVIGQRNTFFCTRCQR. The active-site Proton donor; for delta-elimination activity is R259.

This sequence belongs to the FPG family. In terms of assembly, monomer. Requires Zn(2+) as cofactor.

It carries out the reaction Hydrolysis of DNA containing ring-opened 7-methylguanine residues, releasing 2,6-diamino-4-hydroxy-5-(N-methyl)formamidopyrimidine.. It catalyses the reaction 2'-deoxyribonucleotide-(2'-deoxyribose 5'-phosphate)-2'-deoxyribonucleotide-DNA = a 3'-end 2'-deoxyribonucleotide-(2,3-dehydro-2,3-deoxyribose 5'-phosphate)-DNA + a 5'-end 5'-phospho-2'-deoxyribonucleoside-DNA + H(+). Functionally, involved in base excision repair of DNA damaged by oxidation or by mutagenic agents. Acts as a DNA glycosylase that recognizes and removes damaged bases. Has a preference for oxidized purines, such as 7,8-dihydro-8-oxoguanine (8-oxoG). Has AP (apurinic/apyrimidinic) lyase activity and introduces nicks in the DNA strand. Cleaves the DNA backbone by beta-delta elimination to generate a single-strand break at the site of the removed base with both 3'- and 5'-phosphates. This chain is Formamidopyrimidine-DNA glycosylase, found in Alteromonas mediterranea (strain DSM 17117 / CIP 110805 / LMG 28347 / Deep ecotype).